The chain runs to 321 residues: Fe-S cluster assembly protein DRE2 (321 aa).

The segment at 1 to 131 is N-terminal SAM-like domain; it reads MERMLLLSPP…KPDFGPENIV (131 aa). Positions 132 to 213 are linker; the sequence is PLKLGKRKPV…EETLLDGEDM (82 aa). Residues C223, C234, C237, and C239 each coordinate [2Fe-2S] cluster. Residues 223–239 are fe-S binding site A; the sequence is CRPKAGKRRRACKDCTC. The [4Fe-4S] cluster site is built by C284, C287, C295, and C298. Short sequence motifs (cx2C motif) lie at residues 284 to 287 and 295 to 298; these read CGNC and CDGC. The tract at residues 284–298 is fe-S binding site B; sequence CGNCALGDAFRCDGC.

This sequence belongs to the anamorsin family. In terms of assembly, monomer. Interacts with TAH18. Interacts with MIA40. It depends on [2Fe-2S] cluster as a cofactor. [4Fe-4S] cluster is required as a cofactor.

It localises to the cytoplasm. The protein resides in the mitochondrion intermembrane space. Its function is as follows. Component of the cytosolic iron-sulfur (Fe-S) protein assembly (CIA) machinery required for the maturation of extramitochondrial Fe-S proteins. Part of an electron transfer chain functioning in an early step of cytosolic Fe-S biogenesis, facilitating the de novo assembly of a [4Fe-4S] cluster on the scaffold complex CFD1-NBP35. Electrons are transferred to DRE2 from NADPH via the FAD- and FMN-containing protein TAH18. TAH18-DRE2 are also required for the assembly of the diferric tyrosyl radical cofactor of ribonucleotide reductase (RNR), probably by providing electrons for reduction during radical cofactor maturation in the catalytic small subunit RNR2. In Coccidioides posadasii (strain C735) (Valley fever fungus), this protein is Fe-S cluster assembly protein DRE2.